A 265-amino-acid chain; its full sequence is 4-hydroxy-tetrahydrodipicolinate reductase (265 aa).

9–14 (GPRGRM) is an NAD(+) binding site. Residue R37 coordinates NADP(+). NAD(+)-binding positions include 98 to 100 (GTT) and 124 to 127 (APNF). H154 serves as the catalytic Proton donor/acceptor. H155 contributes to the (S)-2,3,4,5-tetrahydrodipicolinate binding site. K158 acts as the Proton donor in catalysis. A (S)-2,3,4,5-tetrahydrodipicolinate-binding site is contributed by 164 to 165 (GT).

This sequence belongs to the DapB family.

The protein resides in the cytoplasm. The catalysed reaction is (S)-2,3,4,5-tetrahydrodipicolinate + NAD(+) + H2O = (2S,4S)-4-hydroxy-2,3,4,5-tetrahydrodipicolinate + NADH + H(+). It catalyses the reaction (S)-2,3,4,5-tetrahydrodipicolinate + NADP(+) + H2O = (2S,4S)-4-hydroxy-2,3,4,5-tetrahydrodipicolinate + NADPH + H(+). It functions in the pathway amino-acid biosynthesis; L-lysine biosynthesis via DAP pathway; (S)-tetrahydrodipicolinate from L-aspartate: step 4/4. In terms of biological role, catalyzes the conversion of 4-hydroxy-tetrahydrodipicolinate (HTPA) to tetrahydrodipicolinate. In Geobacillus kaustophilus (strain HTA426), this protein is 4-hydroxy-tetrahydrodipicolinate reductase.